Reading from the N-terminus, the 294-residue chain is tRNA-cytidine(32) 2-sulfurtransferase (294 aa).

A PP-loop motif motif is present at residues serine 70–serine 75. [4Fe-4S] cluster-binding residues include cysteine 145, cysteine 148, and cysteine 236.

This sequence belongs to the TtcA family. In terms of assembly, homodimer. Mg(2+) serves as cofactor. [4Fe-4S] cluster is required as a cofactor.

Its subcellular location is the cytoplasm. It catalyses the reaction cytidine(32) in tRNA + S-sulfanyl-L-cysteinyl-[cysteine desulfurase] + AH2 + ATP = 2-thiocytidine(32) in tRNA + L-cysteinyl-[cysteine desulfurase] + A + AMP + diphosphate + H(+). It functions in the pathway tRNA modification. In terms of biological role, catalyzes the ATP-dependent 2-thiolation of cytidine in position 32 of tRNA, to form 2-thiocytidine (s(2)C32). The sulfur atoms are provided by the cysteine/cysteine desulfurase (IscS) system. This chain is tRNA-cytidine(32) 2-sulfurtransferase, found in Rhizobium meliloti (strain 1021) (Ensifer meliloti).